We begin with the raw amino-acid sequence, 156 residues long: Small ribosomal subunit protein uS7 (156 aa).

The protein belongs to the universal ribosomal protein uS7 family. As to quaternary structure, part of the 30S ribosomal subunit. Contacts proteins S9 and S11.

Functionally, one of the primary rRNA binding proteins, it binds directly to 16S rRNA where it nucleates assembly of the head domain of the 30S subunit. Is located at the subunit interface close to the decoding center, probably blocks exit of the E-site tRNA. The polypeptide is Small ribosomal subunit protein uS7 (Kocuria rhizophila (strain ATCC 9341 / DSM 348 / NBRC 103217 / DC2201)).